Reading from the N-terminus, the 1418-residue chain is MIGATSFLNHSGPRPPRYRTPSPPRRAVEPISPFTTTTDFRASWIDRGDSQAASYDRDRVTSNNDVYSSTNRGSHGRTSHGRSSSTIDTLATIALATSPTFAPLSYRPPSQDPTPAMPLFPSQSIESTERPAKRPRSEKSPSPLHQPQTTVAPDANPSSTFDSMKTDAELLLNFARPSNFQPAAFYPSKRVSIDESYHPHYGEEPKSHFRAGLGSTYILPDGEKSAYHTSANTAFPASRMRSQSDGSAFISRPVIQGVRPNTSSSTLPPIVWQEEEGNAKTGPGPPSTKFPGAETRYENSVFTGIDTGADRASLDVPPRGDDDTESDENNQANCAACNLVRIPVDSEEQGDVTWISCDGCKQWFHIVCAGFKNDREIRTVDKFICRRCRPIHGQTTFVRKSSRARTAIDYAGLNQGLVKAASDSLEHHYIEPIREGKIRFLPDNFPRMRPELVTAEYFERGSGMTEPIVIPAHLNTRDSIPIVDPEFDSLVQEATSQEMFDELLEHLPEEGKDFETVIDCGQDQLDMVVPQGLTVRAVAELYGPEERVEVIDVKSQQGEDKRWNMQKWADYYESTGSKVVRNVISLEVSQSKLGKLIRRPKIVRDLDLQDAVWPEELKAIGDYPKVQFYCLMSVADCYTDFHIDFGGSSVYYHILKGKKTFFFIPPKDKHLKKYEDWCNSPAQDSTFLGDQTKECYRVDLSEGDTMLIPSGWIHAVWTPTNSLVIGGNFLTRLNYGMQIKVAKIEKDTKVPRKFRYPFFQRIQWYTALKYLEDDPIPQSVLNAFAEDENYRFHRAYPIYYEFGERENKAPAGDPYHNSRFYSQAELEGLPDLAKYLLRTALIASGYMVEGVTMDARNAVKRSIPKGQGDPIDTVRKFGIWVAWKRGNEKAPQWTRPGVVESNAKLSLTEKKPAGRPSRRSERNAEGQRMYAERQAVQRPLEQPPDLTNGLSSEESSSAPSTVEIPQSTVISTLPGTETKELKEEIAQKPRSIHRSSGLGPKRVACDACRKRRIRCRHKDEHNDTISAKQTTFGTFPAGVQSSLAHDAASALNSLAAIASEAGFQDAANGHGLERLEGSGNYSTAILSTPNAATSKVHDGSPEGLNTGKKGRSKACDDCRKSKRRCIHDEYGRIDPIKAQERSKPRATASAKRPRPPQEEDAAFTLNKRPKQESTSPVARPASLFRAEGDMSHTQRPVDLEASSYFGTAHDHNGIAQTKLTSAVGQTSYASPPAFQSDTVVMEVAGQGVSKPTASLVSPPTSQADETDVPPEQDAEKDNHVVYYTPTTSSRHSSRQPRHVDRYVPESQPAKAVKTTHTPSKRRASCSGPTTARRVTPGAQGSSKKPASRPSSSHAKKGVSPVTEKKFDRMTTTSTSPGHKGAKRERTAIADDEPDAESLRLIRELQEQEFGLRKRTTRV.

Disordered regions lie at residues 1 to 86 (MIGA…SSST), 102 to 162 (APLS…STFD), and 308 to 329 (GADR…SDEN). Residues 44–60 (WIDRGDSQAASYDRDRV) show a composition bias toward basic and acidic residues. Residues 61–71 (TSNNDVYSSTN) show a composition bias toward polar residues. Basic and acidic residues predominate over residues 127–139 (STERPAKRPRSEK). Residues 143 to 162 (PLHQPQTTVAPDANPSSTFD) are compositionally biased toward polar residues. The span at 308-321 (GADRASLDVPPRGD) shows a compositional bias: basic and acidic residues. The PHD-type zinc finger occupies 331–391 (QANCAACNLV…KFICRRCRPI (61 aa)). One can recognise a JmjC domain in the interval 588–746 (VSQSKLGKLI…MQIKVAKIEK (159 aa)). T639 contributes to the substrate binding site. Residues H642 and D644 each contribute to the Fe cation site. K659 serves as a coordination point for substrate. H714 serves as a coordination point for Fe cation. Disordered regions lie at residues 891 to 964 (PQWT…TVEI), 1090 to 1118 (NAAT…CDDC), 1130 to 1195 (YGRI…HTQR), and 1250 to 1394 (KPTA…DEPD). Over residues 907–925 (LTEKKPAGRPSRRSERNAE) the composition is skewed to basic and acidic residues. Composition is skewed to basic and acidic residues over residues 1130–1143 (YGRI…ERSK) and 1186–1195 (AEGDMSHTQR). Positions 1250-1263 (KPTASLVSPPTSQA) are enriched in polar residues. A compositionally biased stretch (low complexity) spans 1341–1352 (SSKKPASRPSSS).

This sequence belongs to the JHDM1 histone demethylase family. Fe(2+) serves as cofactor.

The protein resides in the nucleus. The enzyme catalyses N(6),N(6)-dimethyl-L-lysyl(36)-[histone H3] + 2 2-oxoglutarate + 2 O2 = L-lysyl(36)-[histone H3] + 2 formaldehyde + 2 succinate + 2 CO2. Functionally, histone demethylase that specifically demethylates 'Lys-36' of histone H3, thereby playing a central role in histone code. The protein is JmjC domain-containing histone demethylation protein 1 (jhd1) of Aspergillus fumigatus (strain ATCC MYA-4609 / CBS 101355 / FGSC A1100 / Af293) (Neosartorya fumigata).